A 163-amino-acid polypeptide reads, in one-letter code: Nucleotide-binding protein EAT1b_2037 (163 aa).

The protein belongs to the YajQ family.

In terms of biological role, nucleotide-binding protein. The chain is Nucleotide-binding protein EAT1b_2037 from Exiguobacterium sp. (strain ATCC BAA-1283 / AT1b).